The sequence spans 85 residues: MLKFAIAVALLLFIGLELREARDGYPQSKVNYCKIYCPNTTVCQWTCKNRAGATDGDCRWSSCYCFNVAPDTVLYGDPGTKPCMA.

The signal sequence occupies residues 1-21; sequence MLKFAIAVALLLFIGLELREA. The 63-residue stretch at 22 to 84 folds into the LCN-type CS-alpha/beta domain; that stretch reads RDGYPQSKVN…YGDPGTKPCM (63 aa). Disulfide bonds link Cys-33/Cys-83, Cys-37/Cys-58, Cys-43/Cys-63, and Cys-47/Cys-65.

It belongs to the long (4 C-C) scorpion toxin superfamily. Sodium channel inhibitor family. Beta subfamily. As to expression, expressed by the venom gland.

The protein localises to the secreted. In terms of biological role, alpha toxins bind voltage-independently at site-3 of sodium channels (Nav) and inhibit the inactivation of the activated channels, thereby blocking neuronal transmission. This toxin binds, in vitro, to sodium channels and inhibits the inactivation of the activated channels. Seems not toxic to mice, crickets and sweet-water shrimps. In Tityus discrepans (Venezuelan scorpion), this protein is Toxin TdNa9.